The primary structure comprises 157 residues: Transcriptional repressor NrdR (157 aa).

The segment at 3–34 (CPFCRHPDSRVIDSRTSDDGLSIRRRRQCPEC) is a zinc-finger region. In terms of domain architecture, ATP-cone spans 46–136 (LSVIKRSGVV…VYQAFDSLED (91 aa)).

It belongs to the NrdR family. It depends on Zn(2+) as a cofactor.

Its function is as follows. Negatively regulates transcription of bacterial ribonucleotide reductase nrd genes and operons by binding to NrdR-boxes. The polypeptide is Transcriptional repressor NrdR (Leifsonia xyli subsp. xyli (strain CTCB07)).